A 134-amino-acid chain; its full sequence is Transcription antitermination protein NusB (134 aa).

This sequence belongs to the NusB family.

Its function is as follows. Involved in transcription antitermination. Required for transcription of ribosomal RNA (rRNA) genes. Binds specifically to the boxA antiterminator sequence of the ribosomal RNA (rrn) operons. The sequence is that of Transcription antitermination protein NusB from Halothermothrix orenii (strain H 168 / OCM 544 / DSM 9562).